The primary structure comprises 156 residues: ATP synthase subunit b (156 aa).

Residues 7–27 (LIGQTVAFIIFVWFCMKFVWP) traverse the membrane as a helical segment.

This sequence belongs to the ATPase B chain family. As to quaternary structure, F-type ATPases have 2 components, F(1) - the catalytic core - and F(0) - the membrane proton channel. F(1) has five subunits: alpha(3), beta(3), gamma(1), delta(1), epsilon(1). F(0) has three main subunits: a(1), b(2) and c(10-14). The alpha and beta chains form an alternating ring which encloses part of the gamma chain. F(1) is attached to F(0) by a central stalk formed by the gamma and epsilon chains, while a peripheral stalk is formed by the delta and b chains.

It is found in the cell inner membrane. In terms of biological role, f(1)F(0) ATP synthase produces ATP from ADP in the presence of a proton or sodium gradient. F-type ATPases consist of two structural domains, F(1) containing the extramembraneous catalytic core and F(0) containing the membrane proton channel, linked together by a central stalk and a peripheral stalk. During catalysis, ATP synthesis in the catalytic domain of F(1) is coupled via a rotary mechanism of the central stalk subunits to proton translocation. Functionally, component of the F(0) channel, it forms part of the peripheral stalk, linking F(1) to F(0). This Shewanella oneidensis (strain ATCC 700550 / JCM 31522 / CIP 106686 / LMG 19005 / NCIMB 14063 / MR-1) protein is ATP synthase subunit b.